A 264-amino-acid chain; its full sequence is Accessory gland-specific peptide 26Aa (264 aa).

The signal sequence occupies residues 1–18 (MNQILLCSPILLLLFTVA). The sufficient for promoting ovulation when expressed in females stretch occupies residues 1-138 (MNQILLCSPI…LQQRLLTEQN (138 aa)). N-linked (GlcNAc...) asparagine glycans are attached at residues asparagine 88, asparagine 122, asparagine 138, and asparagine 145. A disordered region spans residues 189–219 (LQNTRKSTKPCKKRSSKDSAPPAANQFQEAN). Residues 194–203 (KSTKPCKKRS) are compositionally biased toward basic residues. The tract at residues 219-264 (NVRNTYRNKYLTLLKELSQKINNEIAKVATDVPTETNPSQGNLPTL) is necessary and sufficient for homodimerization.

As to quaternary structure, homodimer. In terms of assembly, may form a homodimer. Post-translationally, glycosylation. In terms of processing, undergoes several cleavages as it is secreted and is further processed in the recipient female. The precursor molecule is proteolytically cleaved by the seminal metalloprotease Semp1 at Lys-48 to produce CP1-N and CP1-C. Cleaved at Lys-67 by Semp1 to generate CP2-N and CP2-C. Cleavage appears to take place in the mated female genital tract. Post-translationally, cleaved at Lys-117 by Semp1 to generate CP3-N and CP3-C. Cleavage appears to take place in the mated female genital tract. Produced in the male accessory glands and secreted into seminal fluid (at protein level). Detected in the main cells and secondary cells of the accessory glands of 1 day old males (at protein level). In 5 day old males, confined to the secondary cells and only reappears in the main cells after mating (at protein level). Produced in adult males 3-4 hr after eclosion, levels increase reaching a peak at day 3-5 which is maintained until at least day 10 of adulthood (at protein level). In unmated male adults, levels are maintained for the first 6 days of adulthood and then gradually decrease for at least the next 8 days. In mated females, detected in the genital tract 3 minutes after the start of mating (ASM) and is secreted into the female hemolymph via the posterior vaginal wall 5 minutes ASM (at protein level).

It is found in the secreted. Its subcellular location is the cytoplasm. Its function is as follows. Male seminal protein which enhances ovulation in female Drosophila by stimulating the release of oocytes by the ovary following mating. Acts by increasing octopamine (OA) neuronal signaling in the female genital tract leading to the postmating relaxation of the oviduct muscles. This activation of the OA signaling pathway is likely to indirectly contribute to the mating-dependent increase in the number of OA synaptic sites in the female reproductive tract. In terms of biological role, male seminal peptide which is able to enhance ovulation in female Drosophila. In Drosophila melanogaster (Fruit fly), this protein is Accessory gland-specific peptide 26Aa.